We begin with the raw amino-acid sequence, 136 residues long: Large ribosomal subunit protein uL16 (136 aa).

This sequence belongs to the universal ribosomal protein uL16 family. Part of the 50S ribosomal subunit.

Functionally, binds 23S rRNA and is also seen to make contacts with the A and possibly P site tRNAs. This is Large ribosomal subunit protein uL16 from Erwinia tasmaniensis (strain DSM 17950 / CFBP 7177 / CIP 109463 / NCPPB 4357 / Et1/99).